The following is a 442-amino-acid chain: Elongation factor 1-gamma (442 aa).

In terms of domain architecture, GST N-terminal spans 2–87 (AAGTLYTYPE…YLSNDVLRGS (86 aa)). The GST C-terminal domain maps to 88 to 216 (TPQASAQVLQ…VKLCEKMAQF (129 aa)). Basic and acidic residues-rich tracts occupy residues 227-242 (KKEA…KEGG) and 249-263 (QEKK…KAAP). The segment at 227 to 273 (KKEAPIKKEKGGKEGGKQQPQQQEKKEKKKEEKKAAPAEEEMDECEA) is disordered. One can recognise an EF-1-gamma C-terminal domain in the interval 281–442 (AKDPFAHLPK…KPFNQGKIFK (162 aa)).

In terms of assembly, EF-1 is composed of four subunits: alpha, beta, delta, and gamma.

In terms of biological role, probably plays a role in anchoring the complex to other cellular components. The polypeptide is Elongation factor 1-gamma (eef1g) (Danio rerio (Zebrafish)).